Reading from the N-terminus, the 256-residue chain is NifU-like protein, mitochondrial (256 aa).

Residues 196–199 (CTSC) carry the CxxC motif motif.

Belongs to the NifU family. Homodimer; in absence of BOL3, probably bridged by an iron-sulfure cluster. Interacts with BOL3. Interacts with apo-target proteins, such as ACO1, LYS4, ACO2 and SDH2.

The protein resides in the mitochondrion matrix. Functionally, involved in iron homeostasis within the mitochondrion where it is involved in the assembly of iron-sulfur proteins. Together with BOL3, required during the last step of iron-sulfur protein assembly when the iron-sulfur cluster is inserted into the target protein. Required for protecting iron sulfur clusters from oxidative damage. The polypeptide is NifU-like protein, mitochondrial (NFU1) (Saccharomyces cerevisiae (strain ATCC 204508 / S288c) (Baker's yeast)).